An 815-amino-acid chain; its full sequence is MAASTLPSGLSTNDLIRRTANPHPNVWGYDLLCSLKSPYSRDSSYKERADTLINEIKAMLGAAFGDGKEMITPSAYDTAWVARIPSIDGSSGSARPQFPQTVDWILKNQLKDGSWGTESHFLLSEPLLATISCVLALFKWQVGDLQVERGIEFLKSSLEKIKNESDQDSLVTDFEIIFPSMLREAQSLHLGLPYDLPYIQLLQTKRQERLANLSREKIHGGILQLSSLEGIEDMVEWERLMDLQSLDGSFLSSPASTAFVFIHTGDLKCLAFLNSVLAKFGAFVPCLYHVDLLERLLIVDNIERLGIDRHFEKEINEALDYVYRYWSNERGIGWGRMNATADLETTALGFRLLRLHRYHVSPVVFKKFKDADGEFLSSIGQFNKDVASMLNLYRACELAFPGENILDEAKGFTAKYLREALEKTETFSSWNIKRNLSQEIKYALKTSWHASIPRVEAKRYCQVYRPDYARLDKSVYKLHHVNNEKILELAKLDFNIIQSILQEEMKNVTSWFRDSGLPLFSFARQRPLEFYFLITAGTYEPRYAKCRLLFTKVACVETVLDDMYDTYGTLDELKLFTQAVRRWDPSLTENLPDYMKRCYKIFYDIVHEAAWEAEKEQGRELVSFLRKAWEDFVLSYHEEAEWLSAEYVPGFDEYIKNGITSIGQRVLLLSGLLVMDGQLLSQKALEKIDYPERSRVLMEQICLISRLADDTQSYKAEKARGELASGIECYMKDHPECTEEEALNHIYGIMEVTAKELTKEYLKVDDDDVPFACKKMLFEETRVTMVIFKDGDRLSNSKLEMKDHFKECLIEPLPL.

Mg(2+) is bound by residues Asp561, Asp565, Asp709, and Glu717. Residues 561–565 carry the DDXXD motif motif; it reads DDMYD.

The protein belongs to the terpene synthase family. Tpsd subfamily. Requires Mg(2+) as cofactor. The cofactor is Mn(2+).

It localises to the cytoplasm. The catalysed reaction is (2E,6E)-farnesyl diphosphate = (E)-gamma-bisabolene + diphosphate. Its pathway is terpene metabolism; oleoresin biosynthesis. Functionally, involved in defensive oleoresin formation in conifers in response to insect attack or other injury. Involved in sesquiterpene (C15) olefins biosynthesis. Produces mainly (E)-gamma-bisabolene when used with farnesyl diphosphate as substrate. No activity with geranyl diphosphate or geranylgeranyl diphosphate. The sequence is that of (E)-gamma-bisabolene synthase (TPS3) from Pseudotsuga menziesii (Douglas-fir).